The chain runs to 269 residues: 4-hydroxy-tetrahydrodipicolinate reductase (269 aa).

NAD(+) contacts are provided by residues 12-17 (GGSGRM), 102-104 (GTT), and 126-129 (SPNM). The Proton donor/acceptor role is filled by histidine 159. Histidine 160 lines the (S)-2,3,4,5-tetrahydrodipicolinate pocket. Lysine 163 acts as the Proton donor in catalysis. A (S)-2,3,4,5-tetrahydrodipicolinate-binding site is contributed by 169–170 (GT).

This sequence belongs to the DapB family.

It is found in the cytoplasm. It carries out the reaction (S)-2,3,4,5-tetrahydrodipicolinate + NAD(+) + H2O = (2S,4S)-4-hydroxy-2,3,4,5-tetrahydrodipicolinate + NADH + H(+). The enzyme catalyses (S)-2,3,4,5-tetrahydrodipicolinate + NADP(+) + H2O = (2S,4S)-4-hydroxy-2,3,4,5-tetrahydrodipicolinate + NADPH + H(+). It functions in the pathway amino-acid biosynthesis; L-lysine biosynthesis via DAP pathway; (S)-tetrahydrodipicolinate from L-aspartate: step 4/4. In terms of biological role, catalyzes the conversion of 4-hydroxy-tetrahydrodipicolinate (HTPA) to tetrahydrodipicolinate. The sequence is that of 4-hydroxy-tetrahydrodipicolinate reductase from Leptospira borgpetersenii serovar Hardjo-bovis (strain JB197).